A 96-amino-acid polypeptide reads, in one-letter code: Pro-glucagon (96 aa).

2 stretches are compositionally biased toward basic and acidic residues: residues 1–12 (LQDAEDSSRFDA) and 19–30 (EARELSTPKXHS). The tract at residues 1 to 35 (LQDAEDSSRFDADDTLAGEARELSTPKXHSEGTFS) is disordered.

Belongs to the glucagon family.

It is found in the secreted. Functionally, plays a key role in glucose metabolism and homeostasis. Regulates blood glucose by increasing gluconeogenesis and decreasing glycolysis. In Myoxocephalus scorpius (Shorthorn sculpin), this protein is Pro-glucagon (gcg).